Consider the following 1225-residue polypeptide: ATP-dependent helicase/nuclease subunit A (1225 aa).

Positions 11-478 (AQWTDAQWKS…IDLSKNFRSR (468 aa)) constitute a UvrD-like helicase ATP-binding domain. Position 32–39 (32–39 (AAAGSGKT)) interacts with ATP. In terms of domain architecture, UvrD-like helicase C-terminal spans 479-790 (KEVLATTNYL…RMMTVHSSKG (312 aa)). A compositionally biased stretch (basic and acidic residues) spans 999 to 1014 (EKPSKQSVSELKRQLE). Residues 999 to 1018 (EKPSKQSVSELKRQLETEES) form a disordered region.

The protein belongs to the helicase family. AddA subfamily. As to quaternary structure, heterodimer of AddA and AddB/RexB. Mg(2+) serves as cofactor.

The catalysed reaction is Couples ATP hydrolysis with the unwinding of duplex DNA by translocating in the 3'-5' direction.. It catalyses the reaction ATP + H2O = ADP + phosphate + H(+). In terms of biological role, the heterodimer acts as both an ATP-dependent DNA helicase and an ATP-dependent, dual-direction single-stranded exonuclease. Recognizes the chi site generating a DNA molecule suitable for the initiation of homologous recombination. The AddA nuclease domain is required for chi fragment generation; this subunit has the helicase and 3' -&gt; 5' nuclease activities. This chain is ATP-dependent helicase/nuclease subunit A, found in Staphylococcus haemolyticus (strain JCSC1435).